The sequence spans 425 residues: Kynurenine/alpha-aminoadipate aminotransferase, mitochondrial (425 aa).

Residues 1-29 (MNYSRFLTATSLARKPSPIRTTADILSKA) constitute a mitochondrion transit peptide. Substrate is bound at residue arginine 20. At serine 40 the chain carries Phosphoserine. Residue lysine 69 is modified to N6-acetyllysine. Tyrosine 74 lines the substrate pocket. Position 172 is an N6-succinyllysine (lysine 172). The residue at position 179 (lysine 179) is an N6-acetyllysine. Asparagine 202 contacts substrate. Residue lysine 263 is modified to N6-(pyridoxal phosphate)lysine; alternate. N6-acetyllysine; alternate occurs at positions 263 and 339. N6-succinyllysine; alternate occurs at positions 263 and 339. Position 351 is an N6-acetyllysine (lysine 351). Position 367 is an N6-acetyllysine; alternate (lysine 367). Lysine 367 bears the N6-succinyllysine; alternate mark. Residue arginine 399 coordinates substrate. Residue lysine 422 is modified to N6-acetyllysine.

It belongs to the class-I pyridoxal-phosphate-dependent aminotransferase family. As to quaternary structure, homodimer. Pyridoxal 5'-phosphate is required as a cofactor. In terms of tissue distribution, expressed mainly in kidney and to a lesser amount in liver and brain.

The protein resides in the mitochondrion. The catalysed reaction is L-kynurenine + 2-oxoglutarate = kynurenate + L-glutamate + H2O. It carries out the reaction L-2-aminoadipate + 2-oxoglutarate = 2-oxoadipate + L-glutamate. It catalyses the reaction glycine + 2-oxoglutarate = glyoxylate + L-glutamate. The enzyme catalyses L-kynurenine + glyoxylate = kynurenate + glycine + H2O. The catalysed reaction is 3-hydroxy-L-kynurenine + glyoxylate = xanthurenate + glycine + H2O. It carries out the reaction 2-oxohexanoate + L-kynurenine = L-2-aminohexanoate + kynurenate + H2O. It catalyses the reaction 3-phenylpyruvate + L-kynurenine = kynurenate + L-phenylalanine + H2O. The enzyme catalyses 4-methylsulfanyl-2-oxobutanoate + L-kynurenine = kynurenate + L-methionine + H2O. The catalysed reaction is 2-oxo-3-sulfanylpropanoate + L-kynurenine = kynurenate + L-cysteine + H2O. It carries out the reaction indole-3-pyruvate + L-kynurenine = kynurenate + L-tryptophan + H2O. It catalyses the reaction 2-oxopentanoate + L-kynurenine = L-2-aminopentanoate + kynurenate + H2O. The enzyme catalyses 4-methyl-2-oxopentanoate + L-kynurenine = kynurenate + L-leucine + H2O. The catalysed reaction is glyoxylate + L-methionine = 4-methylsulfanyl-2-oxobutanoate + glycine. It carries out the reaction L-2-aminoadipate + glyoxylate = 2-oxoadipate + glycine. It catalyses the reaction L-tyrosine + glyoxylate = 3-(4-hydroxyphenyl)pyruvate + glycine. The enzyme catalyses glyoxylate + L-phenylalanine = 3-phenylpyruvate + glycine. The catalysed reaction is L-tryptophan + glyoxylate = indole-3-pyruvate + glycine. It carries out the reaction L-leucine + glyoxylate = 4-methyl-2-oxopentanoate + glycine. It catalyses the reaction 2-oxobutanoate + L-kynurenine = (2S)-2-aminobutanoate + kynurenate + H2O. The enzyme catalyses 2-oxoadipate + L-kynurenine = L-2-aminoadipate + kynurenate + H2O. It participates in amino-acid degradation; L-lysine degradation via saccharopine pathway; glutaryl-CoA from L-lysine: step 4/6. Transaminase with broad substrate specificity. Has transaminase activity towards aminoadipate, kynurenine, methionine and glutamate. Shows activity also towards tryptophan, aspartate and hydroxykynurenine. Accepts a variety of oxo-acids as amino-group acceptors, with a preference for 2-oxoglutarate, 2-oxocaproic acid, phenylpyruvate and alpha-oxo-gamma-methiol butyric acid. Can also use glyoxylate as amino-group acceptor (in vitro). This chain is Kynurenine/alpha-aminoadipate aminotransferase, mitochondrial, found in Mus musculus (Mouse).